A 215-amino-acid polypeptide reads, in one-letter code: MGKVYDWFEERLEIQAIADDISSKYVPPHVNIFYCLGGITFTCFLLQVASGFAMTFYYRPTVAEAFASVQYIMTDVNFGWLIRSVHRWSASMMVLTMILHVFRVYLTGGFKKPRELTWVTGVILAVLTVSFGVTGYSLPWDQVGYWAVKIVTGVPDAIPVIGSPLVELLRGSVSVGQSTLTRFYSLHTFILPLLTAVFMLMHFLMIRKQGISGPL.

A helical membrane pass occupies residues 32–52 (IFYCLGGITFTCFLLQVASGF). Cys-35 contacts heme c. Heme b-binding residues include His-86 and His-100. Helical transmembrane passes span 90–110 (ASMMVLTMILHVFRVYLTGGF), 116–136 (LTWVTGVILAVLTVSFGVTGY), and 186–206 (LHTFILPLLTAVFMLMHFLMI). His-187 and His-202 together coordinate heme b.

The protein belongs to the cytochrome b family. PetB subfamily. As to quaternary structure, the 4 large subunits of the cytochrome b6-f complex are cytochrome b6, subunit IV (17 kDa polypeptide, PetD), cytochrome f and the Rieske protein, while the 4 small subunits are PetG, PetL, PetM and PetN. The complex functions as a dimer. The cofactor is heme b. It depends on heme c as a cofactor.

The protein resides in the plastid. The protein localises to the chloroplast thylakoid membrane. In terms of biological role, component of the cytochrome b6-f complex, which mediates electron transfer between photosystem II (PSII) and photosystem I (PSI), cyclic electron flow around PSI, and state transitions. In Coleochaete orbicularis (Charophycean green alga), this protein is Cytochrome b6.